The primary structure comprises 159 residues: Oleosin Cor a 12 (159 aa).

Polar residues predominate over residues 1–10 (MADRPQQLQV). The interval 1–24 (MADRPQQLQVHPQRGHGHYEGGIK) is disordered. 3 helical membrane passes run 45–65 (VGGT…IGLL), 70–90 (LFII…LAVA), and 92–112 (FLSS…VLNY).

This sequence belongs to the oleosin family. In terms of tissue distribution, expressed in seeds.

Its subcellular location is the lipid droplet. The protein resides in the membrane. Its function is as follows. May have a structural role to stabilize the lipid body during desiccation of the seed by preventing coalescence of the oil. Probably interacts with both lipid and phospholipid moieties of lipid bodies. May also provide recognition signals for specific lipase anchorage in lipolysis during seedling growth. The sequence is that of Oleosin Cor a 12 from Corylus avellana (European hazel).